The primary structure comprises 275 residues: Trypsin-3 (275 aa).

Residues 1–22 (MISNKIAILLAVLVVAVACAQA) form the signal peptide. Positions 23 to 48 (RVALKHRSVQALPRFLPRPKYDVGHR) are cleaved as a propeptide — activation peptide. In terms of domain architecture, Peptidase S1 spans 49 to 274 (IVGGFEIDVS…VRDWVRENSG (226 aa)). A disulfide bridge links cysteine 74 with cysteine 90. Residues histidine 89 and aspartate 134 each act as charge relay system in the active site. 2 disulfides stabilise this stretch: cysteine 199–cysteine 215 and cysteine 226–cysteine 250. The Charge relay system role is filled by serine 230.

This sequence belongs to the peptidase S1 family. In terms of tissue distribution, expressed in the midgut. Expression levels drop a few hours after blood feeding and pick up again 28 hours later.

The protein resides in the secreted. It catalyses the reaction Preferential cleavage: Arg-|-Xaa, Lys-|-Xaa.. Functionally, constitutive trypsin that is expressed 2 days after emergence, coinciding with host seeking behavior of the female. The polypeptide is Trypsin-3 (TRYP3) (Anopheles gambiae (African malaria mosquito)).